Reading from the N-terminus, the 277-residue chain is MHIRFTKMHGLGNDFVVIDATRTPVDLTPARVKAIADRHFGVGCDQLLVVEPPGSDEVDFRYRIFNADGGEVEQCGNGARCFVRFVHDKGLTDKREIRVETRAGVIAPALRPDGLVSVDMGVPELSPARIPFVSDSDAWVQPLQLAEDTVAITAVSMGNPHAVQVVADVDTAPVARQGAEIECHPRFPARVNAGFMQVVDAGHIRLRVFERGAGETLACGTGACAAVVAGIGRGLLVSPVRVETRGGELEIAWAGPGTPVVMTGPAVTVFEGELELP.

N13, Q46, and N66 together coordinate substrate. C75 serves as the catalytic Proton donor. Residues 76-77 (GN), N159, N192, and 210-211 (ER) contribute to the substrate site. C219 serves as the catalytic Proton acceptor. A substrate-binding site is contributed by 220–221 (GT).

Belongs to the diaminopimelate epimerase family. In terms of assembly, homodimer.

Its subcellular location is the cytoplasm. The enzyme catalyses (2S,6S)-2,6-diaminopimelate = meso-2,6-diaminopimelate. Its pathway is amino-acid biosynthesis; L-lysine biosynthesis via DAP pathway; DL-2,6-diaminopimelate from LL-2,6-diaminopimelate: step 1/1. Catalyzes the stereoinversion of LL-2,6-diaminopimelate (L,L-DAP) to meso-diaminopimelate (meso-DAP), a precursor of L-lysine and an essential component of the bacterial peptidoglycan. This is Diaminopimelate epimerase from Azoarcus sp. (strain BH72).